We begin with the raw amino-acid sequence, 45 residues long: uncharacterized protein (45 aa).

Residues 1-26 (MIMGKDRQEKKLKASGRVESDRDQSI) are compositionally biased toward basic and acidic residues. The tract at residues 1–45 (MIMGKDRQEKKLKASGRVESDRDQSIHYDGATSLEQNGRFKKRKS) is disordered.

This is an uncharacterized protein from Bacillus subtilis (strain 168).